Reading from the N-terminus, the 122-residue chain is Small ribosomal subunit protein bS16 (122 aa).

Residues 87 to 122 (AQSNPKKALPKKKAQERAAASAAAAEKAAAAAAPEA) form a disordered region. A compositionally biased stretch (low complexity) spans 103 to 122 (RAAASAAAAEKAAAAAAPEA).

This sequence belongs to the bacterial ribosomal protein bS16 family.

In Methylocella silvestris (strain DSM 15510 / CIP 108128 / LMG 27833 / NCIMB 13906 / BL2), this protein is Small ribosomal subunit protein bS16.